We begin with the raw amino-acid sequence, 266 residues long: Hydroxyacylglutathione hydrolase (266 aa).

Residues histidine 53, histidine 55, aspartate 57, histidine 58, histidine 118, aspartate 140, and histidine 178 each coordinate Zn(2+).

The protein belongs to the metallo-beta-lactamase superfamily. Glyoxalase II family. In terms of assembly, monomer. The cofactor is Zn(2+).

It catalyses the reaction an S-(2-hydroxyacyl)glutathione + H2O = a 2-hydroxy carboxylate + glutathione + H(+). Its pathway is secondary metabolite metabolism; methylglyoxal degradation; (R)-lactate from methylglyoxal: step 2/2. Functionally, thiolesterase that catalyzes the hydrolysis of S-D-lactoyl-glutathione to form glutathione and D-lactic acid. The chain is Hydroxyacylglutathione hydrolase from Cupriavidus metallidurans (strain ATCC 43123 / DSM 2839 / NBRC 102507 / CH34) (Ralstonia metallidurans).